Reading from the N-terminus, the 772-residue chain is Delta-like protein A (772 aa).

Positions 1–20 (MGRHLLLLLFSILYMLLCQA) are cleaved as a signal peptide. The Extracellular portion of the chain corresponds to 21–536 (SSSGVFELKL…SQIASDVPWT (516 aa)). The region spanning 179–223 (FVCDEHYYGEGCSVFCRPRDDAFGHFTCGERGEIICDAGWKGQYC) is the DSL domain. 26 disulfides stabilise this stretch: Cys181–Cys190, Cys194–Cys206, Cys214–Cys223, Cys228–Cys239, Cys232–Cys245, Cys259–Cys270, Cys265–Cys276, Cys278–Cys287, Cys294–Cys306, Cys300–Cys316, Cys318–Cys327, Cys334–Cys345, Cys339–Cys354, Cys356–Cys365, Cys372–Cys383, Cys377–Cys393, Cys395–Cys404, Cys411–Cys422, Cys416–Cys431, Cys433–Cys442, Cys449–Cys460, Cys454–Cys469, Cys471–Cys480, Cys487–Cys498, Cys492–Cys507, and Cys509–Cys518. 3 EGF-like domains span residues 225 to 257 (EPIC…RYCD), 257 to 288 (DECI…LFCN), and 290 to 328 (DLNY…ASCE). The region spanning 330–366 (EVNECTGNPCRNGGSCTDMENTYSCTCPPGFYGKNCE) is the EGF-like 4; calcium-binding domain. EGF-like domains are found at residues 368 to 405 (SAMT…FNCE), 407 to 443 (KIDH…MNCD), 445 to 481 (AGDE…RNCS), and 483 to 519 (PVSR…RNCQ). The N-linked (GlcNAc...) asparagine glycan is linked to Asn479. A helical transmembrane segment spans residues 537–557 (AVGSGVLLVLLLVVACAVVVV). Topologically, residues 558-772 (CVRSKVQQRR…KDECVIATEV (215 aa)) are cytoplasmic. Residues 688–722 (EEKRRKRLKSDASEKSKYSESRYSESKYSESKYSE) are disordered. The segment covering 696–722 (KSDASEKSKYSESRYSESKYSESKYSE) has biased composition (basic and acidic residues).

As to quaternary structure, interacts with mib. Post-translationally, ubiquitinated by mib, leading to its endocytosis and subsequent degradation. Ubiquitinated by the ECS(ASB11) complex, leading to its degradation by the proteasome. Expressed in nervous system. In the developing nervous system, it is expressed in overlapping regions with deltaB (dlb) and deltaD (dld); in the neural plate, dla is expressed in patches of contiguous cells with dld, while dlb is confined to scattered cells within those patches that will differentiate as neurons. In 24 hours embryos, expressed in the hindbrain in stripes adjacent to rhombomere boundaries, but not in the actual boundary cells. During gastrulation and tail formation, expressed in embryonic midline cells. Expressed in hair cells of inner ear.

Its subcellular location is the membrane. Functionally, acts as a ligand for Notch receptors and is involved in primary neurogenesis. Can activate Notch receptors, thereby playing a key role in lateral inhibition, a process that prevents the immediate neighbors of each nascent neural cell from simultaneously embarking on neural differentiation. Required for boundary formation during segmentation of the hindbrain. Required for midline cell fate specification prior to germ layer formation; regulates specification of floorplate, notochord and hypochord. In inner ear, it prevents adjacent cells from adopting the same cell fate. Plays a role in angiogenesis. The polypeptide is Delta-like protein A (dla) (Danio rerio (Zebrafish)).